Here is a 367-residue protein sequence, read N- to C-terminus: tRNA/tmRNA (uracil-C(5))-methyltransferase (367 aa).

Positions 190, 218, 223, 239, and 299 each coordinate S-adenosyl-L-methionine. Cys324 (nucleophile) is an active-site residue. Glu358 serves as the catalytic Proton acceptor.

This sequence belongs to the class I-like SAM-binding methyltransferase superfamily. RNA M5U methyltransferase family. TrmA subfamily.

It carries out the reaction uridine(54) in tRNA + S-adenosyl-L-methionine = 5-methyluridine(54) in tRNA + S-adenosyl-L-homocysteine + H(+). It catalyses the reaction uridine(341) in tmRNA + S-adenosyl-L-methionine = 5-methyluridine(341) in tmRNA + S-adenosyl-L-homocysteine + H(+). Its function is as follows. Dual-specificity methyltransferase that catalyzes the formation of 5-methyluridine at position 54 (m5U54) in all tRNAs, and that of position 341 (m5U341) in tmRNA (transfer-mRNA). This is tRNA/tmRNA (uracil-C(5))-methyltransferase from Pectobacterium carotovorum subsp. carotovorum (strain PC1).